We begin with the raw amino-acid sequence, 126 residues long: Small ribosomal subunit protein bS6 (126 aa).

Residues 104 to 126 (QGAEKGKSSSKKVAAEAEASEEA) are disordered.

It belongs to the bacterial ribosomal protein bS6 family.

In terms of biological role, binds together with bS18 to 16S ribosomal RNA. In Coxiella burnetii (strain Dugway 5J108-111), this protein is Small ribosomal subunit protein bS6.